A 328-amino-acid chain; its full sequence is Tryptophan--tRNA ligase (328 aa).

ATP contacts are provided by residues 10-12 (QAT) and 18-19 (GN). Residues 11–19 (ATGSLHLGN) carry the 'HIGH' region motif. An L-tryptophan-binding site is contributed by Asp134. ATP-binding positions include 146-148 (GED), Ile186, and 195-199 (KMSKS). Residues 195-199 (KMSKS) carry the 'KMSKS' region motif.

It belongs to the class-I aminoacyl-tRNA synthetase family. Homodimer.

Its subcellular location is the cytoplasm. The catalysed reaction is tRNA(Trp) + L-tryptophan + ATP = L-tryptophyl-tRNA(Trp) + AMP + diphosphate + H(+). In terms of biological role, catalyzes the attachment of tryptophan to tRNA(Trp). The sequence is that of Tryptophan--tRNA ligase from Rickettsia bellii (strain RML369-C).